The chain runs to 221 residues: Ribonuclease T (221 aa).

Residues 21-195 (VVIDIESAGF…YDTIQTAYLF (175 aa)) enclose the Exonuclease domain. Residues aspartate 24, glutamate 26, histidine 182, and aspartate 187 each contribute to the Mg(2+) site. Catalysis depends on histidine 182, which acts as the Proton donor/acceptor.

The protein belongs to the RNase T family. Homodimer. Mg(2+) serves as cofactor.

Trims short 3' overhangs of a variety of RNA species, leaving a one or two nucleotide 3' overhang. Responsible for the end-turnover of tRNA: specifically removes the terminal AMP residue from uncharged tRNA (tRNA-C-C-A). Also appears to be involved in tRNA biosynthesis. The protein is Ribonuclease T of Buchnera aphidicola subsp. Cinara cedri (strain Cc).